We begin with the raw amino-acid sequence, 277 residues long: Inorganic pyrophosphatase (277 aa).

Diphosphate is bound at residue R80. Mg(2+)-binding residues include D117, D122, and D154.

The protein belongs to the PPase family. Requires Mg(2+) as cofactor.

Its subcellular location is the cytoplasm. It carries out the reaction diphosphate + H2O = 2 phosphate + H(+). Its function is as follows. Involved in osmoadaptation. In Encephalitozoon cuniculi (strain GB-M1) (Microsporidian parasite), this protein is Inorganic pyrophosphatase (IPP1).